The chain runs to 117 residues: Large ribosomal subunit protein bL20 (117 aa).

It belongs to the bacterial ribosomal protein bL20 family.

Functionally, binds directly to 23S ribosomal RNA and is necessary for the in vitro assembly process of the 50S ribosomal subunit. It is not involved in the protein synthesizing functions of that subunit. This chain is Large ribosomal subunit protein bL20, found in Rippkaea orientalis (strain PCC 8801 / RF-1) (Cyanothece sp. (strain PCC 8801)).